Reading from the N-terminus, the 761-residue chain is Complement factor B (761 aa).

The first 22 residues, Met1–Ala22, serve as a signal peptide directing secretion. Sushi domains lie at Val32 to Ala97, Ile98 to Asp157, and Gly160 to Asp217. Cystine bridges form between Cys34/Cys73, Cys59/Cys95, Cys100/Cys142, Cys128/Cys155, Cys162/Cys202, and Cys188/Cys215. Asn119 and Asn139 each carry an N-linked (GlcNAc...) asparagine glycan. Residues Asn267 to Ile466 form the VWFA domain. Residues Ser275 and Ser277 each coordinate Mg(2+). Asn282 is a glycosylation site (N-linked (GlcNAc...) asparagine). Thr350 contacts Mg(2+). Residue Asn375 is glycosylated (N-linked (GlcNAc...) asparagine). The Peptidase S1 domain occupies Leu474–Lys754. Disulfide bonds link Cys475/Cys593, Cys508/Cys524, Cys596/Cys612, Cys653/Cys679, and Cys692/Cys722. Active-site charge relay system residues include His523 and Asp573. The active-site Charge relay system is Ser696.

It belongs to the peptidase S1 family. In terms of assembly, monomer. Interacts with complement C3b; this interaction is dependent on the presence of Mg(2+). Catalytic component of the C3 convertase of the alternative complement pathway, also named C3bBb, composed of complement factor B Bb and complement C3b. Catalytic component of the C5 convertase of the alternative complement pathway, also named C3bBb3b, composed of complement factor B Bb and additional molecules of complement C3b. Interacts to CFP; this interaction contributes to the stabilization of the active C3-convertase enzyme complex. Requires Mg(2+) as cofactor. Mn(2+) serves as cofactor. In terms of processing, cleaved by CFD following activation of the alternative complement system, generating Ba and Bb chains. Cleavage and activation takes place when CFB is already associated with complement C3b.

The protein resides in the secreted. It localises to the cell surface. It carries out the reaction Cleavage of Arg-|-Ser bond in complement component C3 alpha-chain to yield C3a and C3b, and Arg-|-Xaa bond in complement component C5 alpha-chain to yield C5a and C5b.. In terms of biological role, precursor of the catalytic component of the C3 and C5 convertase complexes of the alternative pathway of the complement system, a cascade of proteins that leads to phagocytosis and breakdown of pathogens and signaling that strengthens the adaptive immune system. The alternative complement pathway acts as an amplification loop that enhances other complement pathways (classical, lectin and GZMK) by promoting formation of additional C3 and C5 convertases. CFB is cleaved and activated by CFD to generate Ba and Bb chains; Bb chain constituting the catalytic component of the C3 and C5 convertases. Serine protease component of the complement C3 and C5 convertase complexes of the alternative complement pathway. Following cleavage and activation by factor D (CFD), forms the C3 convertase together with complement C3b. As part of the C3 convertase, cleaves and activates C3 into C3a anaphylatoxin and C3b opsonin, the next components of the complement pathways. When an additional complement C3b molecule binds to the C3 convertase, forms the C5 convertase, which cleaves and activates C5 into C5a anaphylatoxin and C5b component of the membrane attack complex. Its function is as follows. Involved in proliferation and differentiation of preactivated B-lymphocytes, rapid spreading of peripheral blood monocytes, stimulation of lymphocyte blastogenesis and lysis of erythrocytes. In Mus musculus (Mouse), this protein is Complement factor B (Cfb).